A 281-amino-acid chain; its full sequence is Protein ZAR1-like 1.L (281 aa).

A 3CxxC-type zinc finger spans residues 183 to 267 (QKYGFFHCKN…QELCGRCKGQ (85 aa)).

The protein belongs to the ZAR1 family. As to quaternary structure, component of a cytoplasmic ribonucleoprotein complex together with eif4enif1/4E-T and cpeb1. Expressed in oocytes.

The protein resides in the cytoplasm. It localises to the cytoplasmic ribonucleoprotein granule. In terms of biological role, mRNA-binding protein required for maternal mRNA storage, translation and degradation during oocyte maturation. Controls timing of meiosis during oogenesis. Probably promotes formation of some phase-separated membraneless compartment that stores maternal mRNAs in oocytes: acts by undergoing liquid-liquid phase separation upon binding to maternal mRNAs. Binds to the 3'-UTR of maternal mRNAs, inhibiting their translation. This is Protein ZAR1-like 1.L from Xenopus laevis (African clawed frog).